The following is a 1029-amino-acid chain: FYVE, RhoGEF and PH domain-containing protein tag-77 (1029 aa).

2 stretches are compositionally biased toward basic and acidic residues: residues 1–12 and 20–39; these read MKYDMNHRKNSD and TVKE…DNRF. Disordered regions lie at residues 1–155, 185–254, and 279–370; these read MKYD…ATSE, VPRM…ERKT, and NNGV…EKDD. The segment covering 42 to 56 has biased composition (pro residues); the sequence is QPPPPPSPRRAPPPP. Composition is skewed to low complexity over residues 76-85 and 122-133; these read PPSSSESSEN and SSSTSDVSSQNS. 2 stretches are compositionally biased toward polar residues: residues 141–155 and 200–211; these read SCTT…ATSE and PISQVSTLSQVS. Acidic residues predominate over residues 212–227; it reads DEFDEGDTSASDEESM. Residues 316–334 are compositionally biased toward low complexity; that stretch reads SPTSGMSSSSTDDFSRITS. The span at 335-347 shows a compositional bias: polar residues; sequence MTSDRSSILTSHS. Residues 375 to 572 enclose the DH domain; sequence KLHYAAVEFL…ENVTQAVNQK (198 aa). The region spanning 593 to 696 is the PH domain; sequence NVLEPGRVLI…WTDDLTKAQY (104 aa). 7 residues coordinate Zn(2+): C810, C823, C826, C831, C834, C851, and C854. The FYVE-type; degenerate zinc finger occupies 810 to 859; sequence CSTEFNIINRRHHCRDCGWLICKFCKGQAPLSKYDFTKQNVCSECFDRHY.

The protein localises to the cytoplasm. It localises to the cytoskeleton. Activates cdc-42, a member of the Ras-like family of Rho- and Rac proteins, by exchanging bound GDP for free GTP. May play a role in regulating the actin cytoskeleton and cell shape. Required for normal lifespan. The polypeptide is FYVE, RhoGEF and PH domain-containing protein tag-77 (Caenorhabditis elegans).